The chain runs to 526 residues: Bifunctional purine biosynthesis protein PurH (526 aa).

Positions 1–147 (MSVIKRALIS…KNWKHVAIVT (147 aa)) constitute an MGS-like domain.

Belongs to the PurH family.

It catalyses the reaction (6R)-10-formyltetrahydrofolate + 5-amino-1-(5-phospho-beta-D-ribosyl)imidazole-4-carboxamide = 5-formamido-1-(5-phospho-D-ribosyl)imidazole-4-carboxamide + (6S)-5,6,7,8-tetrahydrofolate. It carries out the reaction IMP + H2O = 5-formamido-1-(5-phospho-D-ribosyl)imidazole-4-carboxamide. Its pathway is purine metabolism; IMP biosynthesis via de novo pathway; 5-formamido-1-(5-phospho-D-ribosyl)imidazole-4-carboxamide from 5-amino-1-(5-phospho-D-ribosyl)imidazole-4-carboxamide (10-formyl THF route): step 1/1. The protein operates within purine metabolism; IMP biosynthesis via de novo pathway; IMP from 5-formamido-1-(5-phospho-D-ribosyl)imidazole-4-carboxamide: step 1/1. The chain is Bifunctional purine biosynthesis protein PurH from Neisseria gonorrhoeae (strain NCCP11945).